A 241-amino-acid chain; its full sequence is Serine protease 58 (241 aa).

Positions 1–17 (MKFILLWALLNLTVALA) are cleaved as a signal peptide. The Peptidase S1 domain maps to 18–239 (FNPDYTVSST…YIPWIENVIQ (222 aa)). C41 and C57 are oxidised to a cystine. Residues H56 and D101 each act as charge relay system in the active site. Disulfide bonds link C133/C201, C165/C180, and C191/C215. N156 and N173 each carry an N-linked (GlcNAc...) asparagine glycan. The Charge relay system role is filled by S195.

It belongs to the peptidase S1 family.

It localises to the secreted. The enzyme catalyses Preferential cleavage: Arg-|-Xaa, Lys-|-Xaa.. The sequence is that of Serine protease 58 (PRSS58) from Homo sapiens (Human).